The sequence spans 270 residues: 3-methyl-2-oxobutanoate hydroxymethyltransferase (270 aa).

Asp50 and Asp89 together coordinate Mg(2+). 3-methyl-2-oxobutanoate contacts are provided by residues 50 to 51, Asp89, and Lys118; that span reads DS. Glu120 contributes to the Mg(2+) binding site. The active-site Proton acceptor is Glu187.

It belongs to the PanB family. In terms of assembly, homodecamer; pentamer of dimers. Mg(2+) serves as cofactor.

The protein localises to the cytoplasm. The enzyme catalyses 3-methyl-2-oxobutanoate + (6R)-5,10-methylene-5,6,7,8-tetrahydrofolate + H2O = 2-dehydropantoate + (6S)-5,6,7,8-tetrahydrofolate. It participates in cofactor biosynthesis; (R)-pantothenate biosynthesis; (R)-pantoate from 3-methyl-2-oxobutanoate: step 1/2. Functionally, catalyzes the reversible reaction in which hydroxymethyl group from 5,10-methylenetetrahydrofolate is transferred onto alpha-ketoisovalerate to form ketopantoate. In Helicobacter pylori (strain P12), this protein is 3-methyl-2-oxobutanoate hydroxymethyltransferase.